Reading from the N-terminus, the 237-residue chain is 1-(5-phosphoribosyl)-5-[(5-phosphoribosylamino)methylideneamino] imidazole-4-carboxamide isomerase (237 aa).

Catalysis depends on D8, which acts as the Proton acceptor. D127 functions as the Proton donor in the catalytic mechanism.

The protein belongs to the HisA/HisF family.

The protein resides in the cytoplasm. The enzyme catalyses 1-(5-phospho-beta-D-ribosyl)-5-[(5-phospho-beta-D-ribosylamino)methylideneamino]imidazole-4-carboxamide = 5-[(5-phospho-1-deoxy-D-ribulos-1-ylimino)methylamino]-1-(5-phospho-beta-D-ribosyl)imidazole-4-carboxamide. It functions in the pathway amino-acid biosynthesis; L-histidine biosynthesis; L-histidine from 5-phospho-alpha-D-ribose 1-diphosphate: step 4/9. This chain is 1-(5-phosphoribosyl)-5-[(5-phosphoribosylamino)methylideneamino] imidazole-4-carboxamide isomerase, found in Sulfurovum sp. (strain NBC37-1).